The sequence spans 176 residues: Crossover junction endodeoxyribonuclease RuvC (176 aa).

Residues Asp-9, Glu-69, and Asp-141 contribute to the active site. Asp-9, Glu-69, and Asp-141 together coordinate Mg(2+).

This sequence belongs to the RuvC family. In terms of assembly, homodimer which binds Holliday junction (HJ) DNA. The HJ becomes 2-fold symmetrical on binding to RuvC with unstacked arms; it has a different conformation from HJ DNA in complex with RuvA. In the full resolvosome a probable DNA-RuvA(4)-RuvB(12)-RuvC(2) complex forms which resolves the HJ. Mg(2+) serves as cofactor.

It localises to the cytoplasm. It carries out the reaction Endonucleolytic cleavage at a junction such as a reciprocal single-stranded crossover between two homologous DNA duplexes (Holliday junction).. Functionally, the RuvA-RuvB-RuvC complex processes Holliday junction (HJ) DNA during genetic recombination and DNA repair. Endonuclease that resolves HJ intermediates. Cleaves cruciform DNA by making single-stranded nicks across the HJ at symmetrical positions within the homologous arms, yielding a 5'-phosphate and a 3'-hydroxyl group; requires a central core of homology in the junction. The consensus cleavage sequence is 5'-(A/T)TT(C/G)-3'. Cleavage occurs on the 3'-side of the TT dinucleotide at the point of strand exchange. HJ branch migration catalyzed by RuvA-RuvB allows RuvC to scan DNA until it finds its consensus sequence, where it cleaves and resolves the cruciform DNA. The protein is Crossover junction endodeoxyribonuclease RuvC of Chromobacterium violaceum (strain ATCC 12472 / DSM 30191 / JCM 1249 / CCUG 213 / NBRC 12614 / NCIMB 9131 / NCTC 9757 / MK).